Consider the following 602-residue polypeptide: Putative pentatricopeptide repeat-containing protein At1g12700, mitochondrial (602 aa).

Residues Met-1–Phe-95 constitute a mitochondrion transit peptide. PPR repeat units follow at residues Ser-87–His-121, Asn-122–Pro-156, Asp-157–Pro-191, Asp-192–Ala-226, Asp-227–Ser-261, Ser-262–Pro-296, Asn-297–Pro-331, Asn-332–Pro-366, Asp-367–Ala-401, Asn-402–Pro-436, Asp-437–Leu-471, Gly-472–Pro-506, Asn-507–Pro-541, and Asn-542–Ala-576.

It belongs to the PPR family. P subfamily.

The protein resides in the mitochondrion. The chain is Putative pentatricopeptide repeat-containing protein At1g12700, mitochondrial from Arabidopsis thaliana (Mouse-ear cress).